The sequence spans 419 residues: L-rhamnose isomerase (419 aa).

H262, D294, and D296 together coordinate Mn(2+).

The protein belongs to the rhamnose isomerase family. In terms of assembly, homotetramer. The cofactor is Mn(2+).

Its subcellular location is the cytoplasm. The enzyme catalyses L-rhamnopyranose = L-rhamnulose. It functions in the pathway carbohydrate degradation; L-rhamnose degradation; glycerone phosphate from L-rhamnose: step 1/3. Catalyzes the interconversion of L-rhamnose and L-rhamnulose. The chain is L-rhamnose isomerase from Salmonella enteritidis PT4 (strain P125109).